The primary structure comprises 473 residues: Probable cytosolic iron-sulfur protein assembly protein 1 (473 aa).

Residues 1-25 (MPSSTPGGSLKHLSDLTPPSQDRTW) are disordered. WD repeat units follow at residues 11–58 (KHLS…LLST) and 62–104 (GHKR…GRAE). Residues 112-133 (GGLAEADRQEGDDTDGDEEDED) are disordered. Residues 123 to 133 (DDTDGDEEDED) show a composition bias toward acidic residues. 4 WD repeats span residues 144–183 (GHDSEVKSVSWSSGGSLLATCSRDKSIWIWEDLEDGDNNF), 191–230 (EHSGDVKWVAWHPEEECLASGSYDDTIRLWREDVDDWGQV), 235–313 (GHEG…KPPP), and 341–380 (MHDLSIYSVAWSKKTGLIASTGADGRIVIYQERFTSKPPV). A disordered region spans residues 377-405 (KPPVHTTSEQDKPDSARETQKANGERTAP). Positions 384–400 (SEQDKPDSARETQKANG) are enriched in basic and acidic residues. The WD 7 repeat unit spans residues 438–473 (SQQQNFDNSEMDHANEEEVLLSTGDDGVVRVWTLER).

This sequence belongs to the WD repeat CIA1 family.

Functionally, essential component of the cytosolic iron-sulfur (Fe/S) protein assembly machinery. Required for the maturation of extramitochondrial Fe/S proteins. The polypeptide is Probable cytosolic iron-sulfur protein assembly protein 1 (Coccidioides immitis (strain RS) (Valley fever fungus)).